Consider the following 276-residue polypeptide: U6 snRNA phosphodiesterase 1 (276 aa).

Positions 1-58 are disordered; the sequence is MIVNYSSSSSEEESGSSSSPSGKRQKLDTETSEALDHGSAQRKVCKSSHLTPRLPLPE. His131 (proton acceptor) is an active-site residue. Residues 131 to 133, Tyr213, and 215 to 221 contribute to the AMP site; these read HLS and DPSFHIS. UMP is bound by residues Tyr213 and 217–221; that span reads SFHIS. His219 (proton donor) is an active-site residue.

The protein belongs to the 2H phosphoesterase superfamily. USB1 family.

It is found in the nucleus. The enzyme catalyses a 3'-end uridylyl-uridine-RNA = a 3'-end 2',3'-cyclophospho-uridine-RNA + uridine. It catalyses the reaction a 3'-end uridylyl-adenosine-RNA = a 3'-end 2',3'-cyclophospho-uridine-RNA + adenosine. In terms of biological role, 3'-5' RNA exonuclease that trims the 3' end of oligo(U) and oligo(A) tracts of the pre-U6 small nuclear RNA (snRNA) molecule, leading to the formation of a mature U6 snRNA 3' end-terminated with a 2',3'-cyclic phosphate. Participates in the U6 snRNA 3' end processing that prevents U6 snRNA degradation. In addition also removes uridines from the 3' end of U6atac snRNA and possibly the vault RNA VTRNA1-1. The protein is U6 snRNA phosphodiesterase 1 of Danio rerio (Zebrafish).